We begin with the raw amino-acid sequence, 721 residues long: Ribonuclease R (721 aa).

The 339-residue stretch at R249–F587 folds into the RNB domain. An S1 motif domain is found at G639–V719.

This sequence belongs to the RNR ribonuclease family. RNase R subfamily.

The protein localises to the cytoplasm. The catalysed reaction is Exonucleolytic cleavage in the 3'- to 5'-direction to yield nucleoside 5'-phosphates.. In terms of biological role, 3'-5' exoribonuclease that releases 5'-nucleoside monophosphates and is involved in maturation of structured RNAs. The polypeptide is Ribonuclease R (Ureaplasma parvum serovar 3 (strain ATCC 700970)).